The following is a 176-amino-acid chain: Protein singles bar (176 aa).

Transmembrane regions (helical) follow at residues 13–35, 71–91, 111–131, and 140–160; these read LGIRICCCRVCTCINFGFVLSRI, FLATTGHCFTTTGILLLCYAF, LASCMYFSSSSYMGFACVVWL, and GFWAYPAMTACYYMGYAAGIL. Residues 30–173 enclose the MARVEL domain; it reads FVLSRIGLLK…DAYLAFRHFR (144 aa).

Its subcellular location is the membrane. In terms of biological role, essential for myoblast fusion in developing embryos and pupae, and consequently is essential for muscle formation in adults. Required for progression past the pre-fusion complex stage of myoblast fusion. The protein is Protein singles bar of Drosophila melanogaster (Fruit fly).